The primary structure comprises 627 residues: Threonine--tRNA ligase (627 aa).

The interval 1 to 147 (MRMLLIHSDY…TIVPSGEAKA (147 aa)) is editing domain. The segment at 208–507 (PHVRIMLEQE…QSKGIKPMFP (300 aa)) is catalytic. Residues Cys-300, His-352, and His-476 each coordinate Zn(2+).

This sequence belongs to the class-II aminoacyl-tRNA synthetase family. As to quaternary structure, homodimer. Requires Zn(2+) as cofactor.

Its subcellular location is the cytoplasm. The catalysed reaction is tRNA(Thr) + L-threonine + ATP = L-threonyl-tRNA(Thr) + AMP + diphosphate + H(+). Its function is as follows. Catalyzes the attachment of threonine to tRNA(Thr) in a two-step reaction: L-threonine is first activated by ATP to form Thr-AMP and then transferred to the acceptor end of tRNA(Thr). Also edits incorrectly charged L-seryl-tRNA(Thr). The polypeptide is Threonine--tRNA ligase (Thermococcus onnurineus (strain NA1)).